The primary structure comprises 593 residues: NADH-quinone oxidoreductase subunit C/D (593 aa).

The NADH dehydrogenase I subunit C stretch occupies residues 1–184; the sequence is MTTGSALYIP…DPFSLNLAKQ (184 aa). Residues 208 to 593 form an NADH dehydrogenase I subunit D region; it reads DYMFLNLGPN…IDFVMADVDR (386 aa).

It in the N-terminal section; belongs to the complex I 30 kDa subunit family. The protein in the C-terminal section; belongs to the complex I 49 kDa subunit family. In terms of assembly, NDH-1 is composed of 13 different subunits. Subunits NuoB, CD, E, F, and G constitute the peripheral sector of the complex.

It localises to the cell inner membrane. The catalysed reaction is a quinone + NADH + 5 H(+)(in) = a quinol + NAD(+) + 4 H(+)(out). In terms of biological role, NDH-1 shuttles electrons from NADH, via FMN and iron-sulfur (Fe-S) centers, to quinones in the respiratory chain. The immediate electron acceptor for the enzyme in this species is believed to be ubiquinone. Couples the redox reaction to proton translocation (for every two electrons transferred, four hydrogen ions are translocated across the cytoplasmic membrane), and thus conserves the redox energy in a proton gradient. This is NADH-quinone oxidoreductase subunit C/D from Pseudomonas fluorescens (strain ATCC BAA-477 / NRRL B-23932 / Pf-5).